The sequence spans 861 residues: MTPKLGQKKRHRITVVCTNCKKRKSKCDRTKPCGTCVRLGDVDSCVYLIDSSGQPESSPSLNDADPLRKQSTPAERISPGFIKKRRSSQTRQDEDHWQRVRELESQSSLYYLPIHEETPFFIDLIPNGFYLETKRSADNLFGLFSDRAIENRDPYLQAMVTFRSIAIKKMMDKLGSNGNNVKNGSLPKSFEALSTFDADDERHISDDVVDKGNNCRMHQTIHKSLFNKFAQYRENNAKKFSSETILAKDYLPPLKILESEVLALFEEKIYNMIPIFDMKILRHEITIFYQNIVEKGNPISIKHYDHMVFCIILLIIKICRLSVQFSKLTPYIYPVLQEIDTSKFLALVKHYLFETKVLRKCNLLQLQCLILLRFLHWCAPEDGDGPETQYCQILMGTIISSCKEMGINWYCFSHPEKYSFKINRHTRPSYDIMKPSDYISVFRKIWSYVLFWDRKMCFISGEECQIGKTLQCHFKEEADTPTWYIRMLTLDNLMKKINDTLNDDPGKVDLNLLHRLINDLKRNFHILKSLSKNEKETMRHFDFEMEWIIDLFSLSLLHGEMIFYEYDCNITKFYKSFQDLWDMVIHISEKCYNYFFNSDALEVDSLTKFYTNRIVEIVANKVLVIVPAFILRGDRFKTIQYADKKKMIEFLYGVSSVYFNEFGFEYYRCFRKMFTAKIAYKILNRSCEKDAWRIILNFLLNELKLEDNGDSYIDYNDMRLKDICPIILEFQETVQKYDGYRPDILSIWNNEFYPIGKYNDDMTGFKFQMRIKEMQEFLDMEKYSDRFNIFSSFYDHASSQLAKHTEVDTNISITNEQVAETPQKELLQQPLAPALPVNDLIVSEFDVIEDIFDPVDFVSFF.

A DNA-binding region (zn(2)-C6 fungal-type) is located at residues 19–47; it reads NCKKRKSKCDRTKPCGTCVRLGDVDSCVY. Positions 52 to 61 are enriched in polar residues; sequence SGQPESSPSL. Positions 52 to 99 are disordered; it reads SGQPESSPSLNDADPLRKQSTPAERISPGFIKKRRSSQTRQDEDHWQR.

It belongs to the OAF3 family.

It is found in the cytoplasm. The protein resides in the nucleus. The protein localises to the mitochondrion. Transcriptional inhibitor with a significantly increased number of target genes in response to oleate. The sequence is that of Oleate activated transcription factor 3 (OAF3) from Saccharomyces cerevisiae (strain JAY291) (Baker's yeast).